We begin with the raw amino-acid sequence, 710 residues long: Polyribonucleotide nucleotidyltransferase (710 aa).

Asp-489 and Asp-495 together coordinate Mg(2+). Positions 556-615 constitute a KH domain; sequence PKIDTIKIDVDKIKVVIGKGGETIDKIIAETGVKIDIDDEGNVSIYSSDQAAINRTKEII. Residues 625 to 693 form the S1 motif domain; the sequence is GEVYHAKVVR…EKGRVDASMK (69 aa). Residues 691–710 form a disordered region; that stretch reads SMKALIPRPPKPEKKEEKHD. The span at 700 to 710 shows a compositional bias: basic and acidic residues; the sequence is PKPEKKEEKHD.

This sequence belongs to the polyribonucleotide nucleotidyltransferase family. It depends on Mg(2+) as a cofactor.

The protein resides in the cytoplasm. It carries out the reaction RNA(n+1) + phosphate = RNA(n) + a ribonucleoside 5'-diphosphate. Functionally, involved in mRNA degradation. Catalyzes the phosphorolysis of single-stranded polyribonucleotides processively in the 3'- to 5'-direction. The protein is Polyribonucleotide nucleotidyltransferase of Streptococcus pyogenes serotype M2 (strain MGAS10270).